We begin with the raw amino-acid sequence, 418 residues long: UDP-N-acetylglucosamine 1-carboxyvinyltransferase (418 aa).

Position 22-23 (22-23) interacts with phosphoenolpyruvate; the sequence is KN. Arginine 92 is a binding site for UDP-N-acetyl-alpha-D-glucosamine. Cysteine 116 (proton donor) is an active-site residue. 2-(S-cysteinyl)pyruvic acid O-phosphothioketal is present on cysteine 116. Residues aspartate 306 and isoleucine 328 each coordinate UDP-N-acetyl-alpha-D-glucosamine.

This sequence belongs to the EPSP synthase family. MurA subfamily.

It localises to the cytoplasm. The catalysed reaction is phosphoenolpyruvate + UDP-N-acetyl-alpha-D-glucosamine = UDP-N-acetyl-3-O-(1-carboxyvinyl)-alpha-D-glucosamine + phosphate. It participates in cell wall biogenesis; peptidoglycan biosynthesis. Cell wall formation. Adds enolpyruvyl to UDP-N-acetylglucosamine. The protein is UDP-N-acetylglucosamine 1-carboxyvinyltransferase of Solibacter usitatus (strain Ellin6076).